We begin with the raw amino-acid sequence, 396 residues long: MARAKFLREKLHVNVGTIGHVDHGKTTLTAALTKIGAERFGGEFKAYDAIDAAPEEKARGITISTAHVEYESAVRHYAHVDCPGHADYVKNMITGAAQMDGAILVCSAADGPMPQTREHILLSRQVGVPHIVVFLNKADMVDDAELLELVEMEVRELLSKYDFPGDDTPIIHGSARLALEGDQSDIGVPAILKLVEALDTFIPDPTRDVDRPFLMPVEDVFSISGRGTVVTGRIERGIIKVGDEIEIVGIRDTQKTTVTGVEMFRKLLDQGQAGDNAGLLLRGTKRDDVERGQVLCKPGSIKPHTEFEAEVYVLSKDEGGRHTPFFKGYRPQFYFRTTDITGACQLPEGVEMVMPGDNVKMVVTLINPVAMDEGLRFAIREGGRTVGAGVVAKIIK.

The 197-residue stretch at 10–206 folds into the tr-type G domain; sequence KLHVNVGTIG…ALDTFIPDPT (197 aa). The interval 19-26 is G1; that stretch reads GHVDHGKT. Residue 19–26 participates in GTP binding; it reads GHVDHGKT. A Mg(2+)-binding site is contributed by threonine 26. The tract at residues 60–64 is G2; the sequence is GITIS. The interval 81–84 is G3; sequence DCPG. GTP contacts are provided by residues 81–85 and 136–139; these read DCPGH and NKAD. The segment at 136–139 is G4; the sequence is NKAD. Residues 174-176 are G5; sequence SAR.

Belongs to the TRAFAC class translation factor GTPase superfamily. Classic translation factor GTPase family. EF-Tu/EF-1A subfamily. In terms of assembly, monomer.

The protein resides in the cytoplasm. The enzyme catalyses GTP + H2O = GDP + phosphate + H(+). Functionally, GTP hydrolase that promotes the GTP-dependent binding of aminoacyl-tRNA to the A-site of ribosomes during protein biosynthesis. The protein is Elongation factor Tu 2 of Xanthomonas campestris pv. campestris (strain 8004).